A 353-amino-acid polypeptide reads, in one-letter code: Methionine import ATP-binding protein MetN (353 aa).

The ABC transporter domain occupies 8–249 (LDQIDVTFHQ…PKQPLTQDFI (242 aa)). An ATP-binding site is contributed by 42 to 49 (GYSGAGKS).

The protein belongs to the ABC transporter superfamily. Methionine importer (TC 3.A.1.24) family. As to quaternary structure, the complex is composed of two ATP-binding proteins (MetN), two transmembrane proteins (MetI) and a solute-binding protein (MetQ).

It is found in the cell membrane. It catalyses the reaction L-methionine(out) + ATP + H2O = L-methionine(in) + ADP + phosphate + H(+). The enzyme catalyses D-methionine(out) + ATP + H2O = D-methionine(in) + ADP + phosphate + H(+). Functionally, part of the ABC transporter complex MetNIQ involved in methionine import. Responsible for energy coupling to the transport system. The polypeptide is Methionine import ATP-binding protein MetN (Streptococcus pneumoniae (strain ATCC BAA-255 / R6)).